We begin with the raw amino-acid sequence, 189 residues long: Peptidyl-tRNA hydrolase (189 aa).

Residue Tyr16 coordinates tRNA. Residue His21 is the Proton acceptor of the active site. Residues Phe67, Asn69, and Asn115 each contribute to the tRNA site.

It belongs to the PTH family. As to quaternary structure, monomer.

The protein localises to the cytoplasm. It catalyses the reaction an N-acyl-L-alpha-aminoacyl-tRNA + H2O = an N-acyl-L-amino acid + a tRNA + H(+). Its function is as follows. Hydrolyzes ribosome-free peptidyl-tRNAs (with 1 or more amino acids incorporated), which drop off the ribosome during protein synthesis, or as a result of ribosome stalling. Functionally, catalyzes the release of premature peptidyl moieties from peptidyl-tRNA molecules trapped in stalled 50S ribosomal subunits, and thus maintains levels of free tRNAs and 50S ribosomes. The polypeptide is Peptidyl-tRNA hydrolase (Legionella pneumophila (strain Paris)).